Consider the following 492-residue polypeptide: 2,3-bisphosphoglycerate-independent phosphoglycerate mutase (492 aa).

Residues Asp11 and Ser61 each coordinate Mn(2+). Ser61 acts as the Phosphoserine intermediate in catalysis. Substrate is bound by residues His118, 147–148 (RD), Arg178, Arg184, 248–251 (RNDR), and Lys320. Residues Asp386, His390, Asp427, His428, and His445 each coordinate Mn(2+).

This sequence belongs to the BPG-independent phosphoglycerate mutase family. Monomer. It depends on Mn(2+) as a cofactor.

It carries out the reaction (2R)-2-phosphoglycerate = (2R)-3-phosphoglycerate. It functions in the pathway carbohydrate degradation; glycolysis; pyruvate from D-glyceraldehyde 3-phosphate: step 3/5. Its function is as follows. Catalyzes the interconversion of 2-phosphoglycerate and 3-phosphoglycerate. This chain is 2,3-bisphosphoglycerate-independent phosphoglycerate mutase, found in Campylobacter jejuni subsp. doylei (strain ATCC BAA-1458 / RM4099 / 269.97).